We begin with the raw amino-acid sequence, 132 residues long: Small ribosomal subunit protein uS11 (132 aa).

A disordered region spans residues 1–21 (MAAPKSAVRKPRRKDKKNIAV). Positions 7-16 (AVRKPRRKDK) are enriched in basic residues.

The protein belongs to the universal ribosomal protein uS11 family. As to quaternary structure, part of the 30S ribosomal subunit. Interacts with proteins S7 and S18. Binds to IF-3.

Functionally, located on the platform of the 30S subunit, it bridges several disparate RNA helices of the 16S rRNA. Forms part of the Shine-Dalgarno cleft in the 70S ribosome. In Clavibacter sepedonicus (Clavibacter michiganensis subsp. sepedonicus), this protein is Small ribosomal subunit protein uS11.